Here is a 611-residue protein sequence, read N- to C-terminus: Dolabella-3,7-dien-18-ol synthase TPS06 (611 aa).

D363, D367, D507, T511, and E515 together coordinate Mg(2+). The DDXXD motif; degenerate signature appears at 363 to 367; sequence DNTFD.

This sequence belongs to the terpene synthase family. Tpsa subfamily. It depends on Mg(2+) as a cofactor. Mn(2+) serves as cofactor. In terms of tissue distribution, predominantly expressed in flowers but also in stems, siliques, roots and leaves.

The protein resides in the cytoplasm. It catalyses the reaction (2E,6E,10E)-geranylgeranyl diphosphate + H2O = (3E,7E)-dolabella-3,7-dien-18-ol + diphosphate. It functions in the pathway secondary metabolite biosynthesis; terpenoid biosynthesis. Involved in terpene biosynthesis in roots. Possesses sesquiterpene (C15) synthase activity and diterpene (C20) synthase activity in vitro. Possesses dolabella-3,7-dien-18-ol synthase activity in vitro. Catalyzes the formation of dolabella-3,7-dien-18-ol from geranylgeranyl diphosphate. In Arabidopsis thaliana (Mouse-ear cress), this protein is Dolabella-3,7-dien-18-ol synthase TPS06.